A 550-amino-acid polypeptide reads, in one-letter code: Glucose-6-phosphate isomerase (550 aa).

Residues 164–165 (GS), 215–220 (SKTFTT), Gln-359, Glu-363, and His-394 each bind D-glucose 6-phosphate. Glu-363 (proton donor) is an active-site residue. His-394 is a catalytic residue. Thr-455 bears the Phosphothreonine mark. Lys-516 lines the D-glucose 6-phosphate pocket. Lys-516 is an active-site residue.

Belongs to the GPI family. Homodimer.

The protein resides in the cytoplasm. It localises to the cytosol. The catalysed reaction is alpha-D-glucose 6-phosphate = beta-D-fructose 6-phosphate. It functions in the pathway carbohydrate degradation; glycolysis; D-glyceraldehyde 3-phosphate and glycerone phosphate from D-glucose: step 2/4. Functionally, in the cytoplasm, catalyzes the conversion of glucose-6-phosphate to fructose-6-phosphate, the second step in glycolysis, and the reverse reaction during gluconeogenesis. This chain is Glucose-6-phosphate isomerase (pgi1), found in Schizosaccharomyces pombe (strain 972 / ATCC 24843) (Fission yeast).